Here is a 542-residue protein sequence, read N- to C-terminus: Mitogen-activated protein kinase 14 (542 aa).

Positions 13-304 constitute a Protein kinase domain; that stretch reads YKIEEVIGKG…AEEALADPYF (292 aa). ATP-binding positions include 19-27 and Lys42; that span reads IGKGSYGVV. The active-site Proton acceptor is Asp139. Thr175 is modified (phosphothreonine). The TXY motif lies at 175 to 177; it reads TDY. The residue at position 177 (Tyr177) is a Phosphotyrosine. 2 disordered regions span residues 388-412 and 482-542; these read STAA…DNRP and RNPA…SGHW. Residues 488–507 are compositionally biased toward polar residues; sequence PNSSVPLGSSYPRRNQTCKS.

This sequence belongs to the protein kinase superfamily. CMGC Ser/Thr protein kinase family. MAP kinase subfamily. Post-translationally, dually phosphorylated on Thr-175 and Tyr-177, which activates the enzyme.

The enzyme catalyses L-seryl-[protein] + ATP = O-phospho-L-seryl-[protein] + ADP + H(+). It carries out the reaction L-threonyl-[protein] + ATP = O-phospho-L-threonyl-[protein] + ADP + H(+). With respect to regulation, activated by threonine and tyrosine phosphorylation. The polypeptide is Mitogen-activated protein kinase 14 (MPK14) (Oryza sativa subsp. japonica (Rice)).